The following is a 336-amino-acid chain: Mitochondrial thiamine diphosphate carrier 1 (336 aa).

Helical transmembrane passes span 11–27 (RRALVDSLAGAISGGIS), 88–105 (VPALFMYMPYTAIQFTVL), 127–150 (YLSYVSGAIAGCTATIGSYPFDLL), 182–199 (LYSGLSPTLVEIIPYAGL), 230–246 (SVSSFQLFLCGFAAGTF), and 303–322 (GLFPSLVKSAPAGAVTFVVY). Solcar repeat units follow at residues 11–111 (RRAL…LKTF), 124–210 (LSPY…FKRS), and 231–328 (VSSF…ISDW).

The protein belongs to the mitochondrial carrier (TC 2.A.29) family. Ubiquitous with highest expression in pollen.

The protein resides in the mitochondrion inner membrane. Its function is as follows. Mitochondrial transporter that mediates uptake of thiamine diphosphate (ThDP) into mitochondria. This is Mitochondrial thiamine diphosphate carrier 1 from Zea mays (Maize).